A 283-amino-acid chain; its full sequence is Thymidylate synthase (283 aa).

R22 provides a ligand contact to dUMP. The active-site Nucleophile is C160. DUMP contacts are provided by residues R180–D183, N191, and H221–Y223. A (6R)-5,10-methylene-5,6,7,8-tetrahydrofolate-binding site is contributed by D183. (6R)-5,10-methylene-5,6,7,8-tetrahydrofolate is bound at residue S282.

It belongs to the thymidylate synthase family. Bacterial-type ThyA subfamily. Homodimer.

The protein resides in the cytoplasm. It catalyses the reaction dUMP + (6R)-5,10-methylene-5,6,7,8-tetrahydrofolate = 7,8-dihydrofolate + dTMP. It participates in pyrimidine metabolism; dTTP biosynthesis. Catalyzes the reductive methylation of 2'-deoxyuridine-5'-monophosphate (dUMP) to 2'-deoxythymidine-5'-monophosphate (dTMP) while utilizing 5,10-methylenetetrahydrofolate (mTHF) as the methyl donor and reductant in the reaction, yielding dihydrofolate (DHF) as a by-product. This enzymatic reaction provides an intracellular de novo source of dTMP, an essential precursor for DNA biosynthesis. This Marinomonas sp. (strain MWYL1) protein is Thymidylate synthase.